A 137-amino-acid chain; its full sequence is TSC22 domain family protein 3 (137 aa).

Positions 1-60 (MNTEMYQTPMEVAVYQLHNFSISFFSSLLGGDVVSVKLDNSASGASVVALDNKIEQAMDL) are AP1-binding. 2 positions are modified to phosphoserine: N40 and V73. A leucine-zipper region spans residues 76–97 (LKEQIRELLEKNSQLERENTLL). The segment at 101 to 137 (ASPEQLEKFQSRLSPEEPAPEAPETPETPEAPGGSAV) is disordered. S102 bears the Phosphoserine mark. Residues T125 and T128 each carry the phosphothreonine modification. The segment covering 128 to 137 (TPEAPGGSAV) has biased composition (low complexity).

The protein belongs to the TSC-22/Dip/Bun family. As to quaternary structure, can form homodimers, however it is likely to function as a monomer. Interacts with NFKB1. Interacts (via N-terminus) with JUN and FOS; these interactions inhibit the binding of active AP1 to its target DNA. Interacts with MYOD1. Interacts with HDAC1; this interaction affects HDAC1 activity on MYOG promoter and thus inhibits MYOD1 transcriptional activity. In terms of assembly, interacts with MYOD1. Expressed in T-cells. Expression inversely correlates with T-cell activation, being higher in resting cells and lower in cells activated by TCR/CD3 triggering (at protein level). Constitutively expressed in lung, intestine, kidney and liver, most probably by resident cells from the macrophage lineage. Expressed in thymus, lymph nodes, bone marrow, spleen, lung and skeletal muscle. As to expression, expressed in spleen and skeletal muscle (at protein level). Expressed in the cortex, medulla and papilla of the kidney. In terms of tissue distribution, expressed in the cortex, medulla and papilla of the kidney. Expressed in spleen and skeletal muscle (at protein level).

It is found in the cytoplasm. The protein localises to the nucleus. Its function is as follows. Protects T-cells from IL2 deprivation-induced apoptosis through the inhibition of FOXO3A transcriptional activity that leads to the down-regulation of the pro-apoptotic factor BCL2L11. In macrophages, plays a role in the anti-inflammatory and immunosuppressive effects of glucocorticoids and IL10. In T-cells, inhibits anti-CD3-induced NFKB1 nuclear translocation and thereby NFKB1 DNA-binding activities. In vitro, suppresses AP-1 transcription factor complex DNA-binding activities. Inhibits myogenic differentiation and mediates anti-myogenic effects of glucocorticoids by binding and regulating MYOD1 and HDAC1 transcriptional activity resulting in reduced expression of MYOG. The protein is TSC22 domain family protein 3 of Mus musculus (Mouse).